Consider the following 237-residue polypeptide: Aliphatic sulfonates import ATP-binding protein SsuB 1 (237 aa).

Residues 5-221 (LMNIRVDRKA…PRDRRDPLLA (217 aa)) enclose the ABC transporter domain. 38–45 (GPSGCGKS) contacts ATP.

It belongs to the ABC transporter superfamily. Aliphatic sulfonates importer (TC 3.A.1.17.2) family. As to quaternary structure, the complex is composed of two ATP-binding proteins (SsuB), two transmembrane proteins (SsuC) and a solute-binding protein (SsuA).

The protein resides in the cell inner membrane. It carries out the reaction ATP + H2O + aliphatic sulfonate-[sulfonate-binding protein]Side 1 = ADP + phosphate + aliphatic sulfonateSide 2 + [sulfonate-binding protein]Side 1.. Its function is as follows. Part of the ABC transporter complex SsuABC involved in aliphatic sulfonates import. Responsible for energy coupling to the transport system. The protein is Aliphatic sulfonates import ATP-binding protein SsuB 1 of Pseudomonas savastanoi pv. phaseolicola (strain 1448A / Race 6) (Pseudomonas syringae pv. phaseolicola (strain 1448A / Race 6)).